Here is a 91-residue protein sequence, read N- to C-terminus: Small ribosomal subunit protein bS18 (91 aa).

The interval Met-1–Arg-21 is disordered. Residues Gly-12–Arg-21 are compositionally biased toward basic residues.

Belongs to the bacterial ribosomal protein bS18 family. In terms of assembly, part of the 30S ribosomal subunit. Forms a tight heterodimer with protein bS6.

Its function is as follows. Binds as a heterodimer with protein bS6 to the central domain of the 16S rRNA, where it helps stabilize the platform of the 30S subunit. This chain is Small ribosomal subunit protein bS18, found in Geotalea daltonii (strain DSM 22248 / JCM 15807 / FRC-32) (Geobacter daltonii).